A 231-amino-acid chain; its full sequence is Ribose-5-phosphate isomerase A (231 aa).

Residues 31 to 34 (SGST), 87 to 90 (DGAD), and 100 to 103 (KGGG) each bind substrate. Glu109 (proton acceptor) is an active-site residue. Lys127 serves as a coordination point for substrate.

It belongs to the ribose 5-phosphate isomerase family. Homodimer.

The catalysed reaction is aldehydo-D-ribose 5-phosphate = D-ribulose 5-phosphate. It functions in the pathway carbohydrate degradation; pentose phosphate pathway; D-ribose 5-phosphate from D-ribulose 5-phosphate (non-oxidative stage): step 1/1. Its function is as follows. Catalyzes the reversible conversion of ribose-5-phosphate to ribulose 5-phosphate. The chain is Ribose-5-phosphate isomerase A from Chlamydia pneumoniae (Chlamydophila pneumoniae).